Here is a 422-residue protein sequence, read N- to C-terminus: Serine--tRNA ligase (422 aa).

229–231 (TAE) contributes to the L-serine binding site. 260-262 (RKE) serves as a coordination point for ATP. Glu-283 is an L-serine binding site. 347-350 (EISS) serves as a coordination point for ATP. Ser-383 lines the L-serine pocket.

Belongs to the class-II aminoacyl-tRNA synthetase family. Type-1 seryl-tRNA synthetase subfamily. In terms of assembly, homodimer. The tRNA molecule binds across the dimer.

The protein resides in the cytoplasm. It catalyses the reaction tRNA(Ser) + L-serine + ATP = L-seryl-tRNA(Ser) + AMP + diphosphate + H(+). The catalysed reaction is tRNA(Sec) + L-serine + ATP = L-seryl-tRNA(Sec) + AMP + diphosphate + H(+). It participates in aminoacyl-tRNA biosynthesis; selenocysteinyl-tRNA(Sec) biosynthesis; L-seryl-tRNA(Sec) from L-serine and tRNA(Sec): step 1/1. In terms of biological role, catalyzes the attachment of serine to tRNA(Ser). Is also able to aminoacylate tRNA(Sec) with serine, to form the misacylated tRNA L-seryl-tRNA(Sec), which will be further converted into selenocysteinyl-tRNA(Sec). The chain is Serine--tRNA ligase from Citrifermentans bemidjiense (strain ATCC BAA-1014 / DSM 16622 / JCM 12645 / Bem) (Geobacter bemidjiensis).